The sequence spans 94 residues: Putative pterin-4-alpha-carbinolamine dehydratase (94 aa).

Belongs to the pterin-4-alpha-carbinolamine dehydratase family.

The catalysed reaction is (4aS,6R)-4a-hydroxy-L-erythro-5,6,7,8-tetrahydrobiopterin = (6R)-L-erythro-6,7-dihydrobiopterin + H2O. This Koribacter versatilis (strain Ellin345) protein is Putative pterin-4-alpha-carbinolamine dehydratase.